Consider the following 141-residue polypeptide: Large ribosomal subunit protein uL16 (141 aa).

The protein belongs to the universal ribosomal protein uL16 family. Part of the 50S ribosomal subunit.

Its function is as follows. Binds 23S rRNA and is also seen to make contacts with the A and possibly P site tRNAs. The polypeptide is Large ribosomal subunit protein uL16 (Rhodospirillum centenum (strain ATCC 51521 / SW)).